Reading from the N-terminus, the 71-residue chain is UPF0346 protein SZO_05010 (71 aa).

It belongs to the UPF0346 family.

This Streptococcus equi subsp. zooepidemicus (strain H70) protein is UPF0346 protein SZO_05010.